We begin with the raw amino-acid sequence, 164 residues long: Ribosomal RNA large subunit methyltransferase H (164 aa).

An S-adenosyl-L-methionine-binding site is contributed by G109.

This sequence belongs to the RNA methyltransferase RlmH family. Homodimer.

It localises to the cytoplasm. It carries out the reaction pseudouridine(1915) in 23S rRNA + S-adenosyl-L-methionine = N(3)-methylpseudouridine(1915) in 23S rRNA + S-adenosyl-L-homocysteine + H(+). Specifically methylates the pseudouridine at position 1915 (m3Psi1915) in 23S rRNA. The polypeptide is Ribosomal RNA large subunit methyltransferase H (Methylobacterium radiotolerans (strain ATCC 27329 / DSM 1819 / JCM 2831 / NBRC 15690 / NCIMB 10815 / 0-1)).